A 353-amino-acid polypeptide reads, in one-letter code: MGLLLSYLFGYIFYSVNKKFHIMEKFGASNSIVNNGPVSIFAYCASSILMTVTNKFVVGAYEFNLNFFLLAVQAAVCLVTIATLKGLGIITYRQFNKDEAKKWFPIAFLLVLMIYTSSKALQYLSIPVYTIFKNLTIILIAYGEVIWFGGKVTTMALGSFILMVLSSVIAYYGDTAETGEKTAEMHLLYLGYAWMFTNCFSSAAFVLIMRKRIKLTNFKDFDTMYYNNLLSLPLLLVFSFLFEDWSSVNLNKNFPPDNRNTTIFVMILSGASSVGISYCSAWCVRVTSSTTYSMVGALNKLPIALSGLVFFNAAVNFWSVSSIFVGFLAGVFYAVAKQKQQKENAQQLPVANK.

Residues 1–31 (MGLLLSYLFGYIFYSVNKKFHIMEKFGASNS) lie on the Cytoplasmic side of the membrane. The chain crosses the membrane as a helical span at residues 32-52 (IVNNGPVSIFAYCASSILMTV). Over 53-66 (TNKFVVGAYEFNLN) the chain is Lumenal. A helical transmembrane segment spans residues 67–87 (FFLLAVQAAVCLVTIATLKGL). The Cytoplasmic segment spans residues 88–102 (GIITYRQFNKDEAKK). A helical membrane pass occupies residues 103-122 (WFPIAFLLVLMIYTSSKALQ). Over 123–125 (YLS) the chain is Lumenal. Residues 126-148 (IPVYTIFKNLTIILIAYGEVIWF) form a helical membrane-spanning segment. The Cytoplasmic segment spans residues 149–154 (GGKVTT). Residues 155-172 (MALGSFILMVLSSVIAYY) traverse the membrane as a helical segment. The Lumenal portion of the chain corresponds to 173 to 187 (GDTAETGEKTAEMHL). Residues 188–208 (LYLGYAWMFTNCFSSAAFVLI) form a helical membrane-spanning segment. At 209-227 (MRKRIKLTNFKDFDTMYYN) the chain is on the cytoplasmic side. Residues 228-248 (NLLSLPLLLVFSFLFEDWSSV) form a helical membrane-spanning segment. Topologically, residues 249–262 (NLNKNFPPDNRNTT) are lumenal. The N-linked (GlcNAc...) asparagine glycan is linked to asparagine 260. A helical transmembrane segment spans residues 263-283 (IFVMILSGASSVGISYCSAWC). Residues 284 to 290 (VRVTSST) are Cytoplasmic-facing. Residues 291-313 (TYSMVGALNKLPIALSGLVFFNA) form a helical membrane-spanning segment. Residues 314–316 (AVN) lie on the Lumenal side of the membrane. The helical transmembrane segment at 317–336 (FWSVSSIFVGFLAGVFYAVA) threads the bilayer. The Cytoplasmic segment spans residues 337–353 (KQKQQKENAQQLPVANK).

Belongs to the TPT transporter family. SLC35D subfamily. As to quaternary structure, homooligomer.

It is found in the golgi apparatus membrane. It localises to the cytoplasmic vesicle membrane. The protein resides in the endoplasmic reticulum membrane. Involved in the import of GDP-mannose from the cytoplasm into the Golgi lumen. The sequence is that of GDP-mannose transporter (VRG4) from Meyerozyma guilliermondii (strain ATCC 6260 / CBS 566 / DSM 6381 / JCM 1539 / NBRC 10279 / NRRL Y-324) (Yeast).